Here is a 325-residue protein sequence, read N- to C-terminus: Proto-oncogene Mas (325 aa).

Topologically, residues 1 to 36 (MDGSNVTSFVVEEPTNISTGRNASVGNAHRQIPIVH) are extracellular. Residues Asn5, Asn16, and Asn22 are each glycosylated (N-linked (GlcNAc...) asparagine). The helical transmembrane segment at 37–61 (WVIMSISPVGFVENGILLWFLCFRM) threads the bilayer. The Cytoplasmic segment spans residues 62-65 (RRNP). Residues 66-86 (FTVYITHLSIADISLLFCIFI) traverse the membrane as a helical segment. At 87–104 (LSIDYALDYELSSGHYYT) the chain is on the extracellular side. Residues 105-128 (IVTLSVTFLFGYNTGLYLLTAISV) form a helical membrane-spanning segment. Residues 129–149 (ERCLSVLYPIWYRCHRPKYQS) are Cytoplasmic-facing. The chain crosses the membrane as a helical span at residues 150-172 (ALVCALLWALSCLVTTMEYVMCI). Residues 173–185 (DREEESHSRNDCR) lie on the Extracellular side of the membrane. The chain crosses the membrane as a helical span at residues 186–206 (AVIIFIAILSFLVFTPLMLVS). Topologically, residues 207–224 (STILVVKIRKNTWASHSS) are cytoplasmic. The helical transmembrane segment at 225 to 245 (KLYIVIMVTIIIFLIFAMPMR) threads the bilayer. The Extracellular portion of the chain corresponds to 246–263 (LLYLLYYEYWSTFGNLHH). Residues 264-284 (ISLLFSTINSSANPFIYFFVG) form a helical membrane-spanning segment. Over 285–325 (SSKKKRFKESLKVVLTRAFKDEMQPRRQKDNCNTVTVETVV) the chain is Cytoplasmic.

The protein belongs to the G-protein coupled receptor 1 family. Interacts with AGTR1. Interacts with FLNA (via filamin repeat 21); increases PKA-mediated phosphorylation of FLNA.

The protein resides in the cell membrane. Its function is as follows. Receptor for angiotensin 1-7. Acts specifically as a functional antagonist of AGTR1 (angiotensin-2 type 1 receptor), although it up-regulates AGTR1 receptor levels. Positive regulation of AGTR1 levels occurs through activation of the G-proteins GNA11 and GNAQ, and stimulation of the protein kinase C signaling cascade. The antagonist effect on AGTR1 function is probably due to AGTR1 being physically altered by MAS1. The polypeptide is Proto-oncogene Mas (MAS1) (Homo sapiens (Human)).